The following is a 362-amino-acid chain: MSVMRNNWTKEEIIAIYNKPLMDLLYEAASIHREYHDPNVVQVSTLLSIKTGGCPEDCGYCPQAARYHTDIEGNDLMSVQQVKAQALRAKSSGSSRVCMGAAWRNVKDGPEFDQVLEMVRTINKLDMEVCCTLGMITENQAHRLAEAGLYAYNHNLDTSEEYYKEVISTRGFEDRIETIANVRKTNVTVCSGGIIGMGESIGDRAGMLVALSTLSPQPESVPINALVAVEGTPMEEEKPVEIWEMIRMVATTRIIMPETQVRLSAGRMNMTREGQAMCFFAGANSIFAGDKLLTTPNPDVNEDMKMFEMLGLNPQKPFTKVSQPTTVEAKDSRYESLGEKPKWSRPSHTIEKNLELSGKGKN.

Residues 39–267 enclose the Radical SAM core domain; that stretch reads NVVQVSTLLS…ETQVRLSAGR (229 aa). [4Fe-4S] cluster is bound by residues cysteine 54, cysteine 58, and cysteine 61. The [2Fe-2S] cluster site is built by cysteine 98, cysteine 130, cysteine 190, and arginine 262. A disordered region spans residues 317-362; it reads PFTKVSQPTTVEAKDSRYESLGEKPKWSRPSHTIEKNLELSGKGKN. A compositionally biased stretch (basic and acidic residues) spans 328-354; sequence EAKDSRYESLGEKPKWSRPSHTIEKNL.

Belongs to the radical SAM superfamily. Biotin synthase family. Homodimer. [4Fe-4S] cluster serves as cofactor. The cofactor is [2Fe-2S] cluster.

It carries out the reaction (4R,5S)-dethiobiotin + (sulfur carrier)-SH + 2 reduced [2Fe-2S]-[ferredoxin] + 2 S-adenosyl-L-methionine = (sulfur carrier)-H + biotin + 2 5'-deoxyadenosine + 2 L-methionine + 2 oxidized [2Fe-2S]-[ferredoxin]. The protein operates within cofactor biosynthesis; biotin biosynthesis; biotin from 7,8-diaminononanoate: step 2/2. Catalyzes the conversion of dethiobiotin (DTB) to biotin by the insertion of a sulfur atom into dethiobiotin via a radical-based mechanism. This Flavobacterium psychrophilum (strain ATCC 49511 / DSM 21280 / CIP 103535 / JIP02/86) protein is Biotin synthase.